The following is a 414-amino-acid chain: tRNA methyltransferase 10 homolog C (414 aa).

The N-terminal 35 residues, 1 to 35 (MNVTVRFLRPFARYLVPYTFHRTRSNSYSRVLQRY), are a transit peptide targeting the mitochondrion. A Phosphoserine modification is found at Ser79. The stretch at 133-162 (GKEMMKKAKQMKKEMKAAAREEAKRARSLE) forms a coiled coil. In terms of domain architecture, SAM-dependent MTase TRM10-type spans 186-378 (LGWKGVQAMQ…KFVPRRKHTG (193 aa)).

Belongs to the class IV-like SAM-binding methyltransferase superfamily. TRM10 family. Component of mitochondrial ribonuclease P, a complex composed of TRMT10C/MRPP1, HSD17B10/MRPP2 and PRORP/MRPP3. Interacts with HSD17B10/MRPP2; forming the MRPP1-MRPP2 subcomplex of the mitochondrial ribonuclease P complex. Interacts with GRSF1.

It is found in the mitochondrion matrix. Its subcellular location is the mitochondrion nucleoid. The catalysed reaction is adenosine(9) in tRNA + S-adenosyl-L-methionine = N(1)-methyladenosine(9) in tRNA + S-adenosyl-L-homocysteine + H(+). The enzyme catalyses guanosine(9) in tRNA + S-adenosyl-L-methionine = N(1)-methylguanosine(9) in tRNA + S-adenosyl-L-homocysteine + H(+). It carries out the reaction an adenosine in mRNA + S-adenosyl-L-methionine = an N(1)-methyladenosine in mRNA + S-adenosyl-L-homocysteine + H(+). Mitochondrial tRNA N(1)-methyltransferase involved in mitochondrial tRNA maturation. Component of mitochondrial ribonuclease P, a complex composed of TRMT10C/MRPP1, HSD17B10/MRPP2 and PRORP/MRPP3, which cleaves tRNA molecules in their 5'-ends. Together with HSD17B10/MRPP2, forms a subcomplex of the mitochondrial ribonuclease P, named MRPP1-MRPP2 subcomplex, which displays functions that are independent of the ribonuclease P activity. The MRPP1-MRPP2 subcomplex catalyzes the formation of N(1)-methylguanine and N(1)-methyladenine at position 9 (m1G9 and m1A9, respectively) in tRNAs; TRMT10C/MRPP1 acting as the catalytic N(1)-methyltransferase subunit. The MRPP1-MRPP2 subcomplex also acts as a tRNA maturation platform: following 5'-end cleavage by the mitochondrial ribonuclease P complex, the MRPP1-MRPP2 subcomplex enhances the efficiency of 3'-processing catalyzed by ELAC2, retains the tRNA product after ELAC2 processing and presents the nascent tRNA to the mitochondrial CCA tRNA nucleotidyltransferase TRNT1 enzyme. In addition to tRNA N(1)-methyltransferase activity, TRMT10C/MRPP1 also acts as a mRNA N(1)-methyltransferase by mediating methylation of adenosine residues at the N(1) position of MT-ND5 mRNA. Associates with mitochondrial DNA complexes at the nucleoids to initiate RNA processing and ribosome assembly. In Rattus norvegicus (Rat), this protein is tRNA methyltransferase 10 homolog C.